Consider the following 771-residue polypeptide: Transcription factor TAS2 (771 aa).

The disordered stretch occupies residues 33 to 53; that stretch reads RSRAESASGPQQPSRRQPQTS. The span at 42–51 shows a compositional bias: low complexity; the sequence is PQQPSRRQPQ. Positions 54-80 form a DNA-binding region, zn(2)-C6 fungal-type; it reads CDLCRSRKIKCDRGTPCGNCRTRGLAC. The interval 125-150 is disordered; it reads AVGGSGNAENGAHGDATPRVPLSGLE.

It is found in the nucleus. Its function is as follows. Transcription factor; part of the gene cluster that mediates the biosynthesis of the toxin tenuazonic acid (TeA), an inhibitor of protein biosynthesis on ribosomes by suppressing the release of new protein. Directly regulates the expression of the hybrid PKS-NRPS synthetase TAS1 and the subsequent production of TeA. The protein is Transcription factor TAS2 of Pyricularia oryzae (strain 70-15 / ATCC MYA-4617 / FGSC 8958) (Rice blast fungus).